We begin with the raw amino-acid sequence, 605 residues long: Zinc metalloproteinase-disintegrin-like BfMP (605 aa).

The signal sequence occupies residues 1-11 (MLVVFPYQGSS). Residues 12 to 179 (IILESGNVND…WESDEPFKNT (168 aa)) constitute a propeptide that is removed on maturation. 2 N-linked (GlcNAc...) asparagine glycosylation sites follow: Asn-178 and Asn-215. Residues 196-392 (KYIEFYVAVD…DRPQCILNKP (197 aa)) form the Peptidase M12B domain. 17 disulfide bridges follow: Cys-307/Cys-387, Cys-347/Cys-371, Cys-350/Cys-355, Cys-403/Cys-432, Cys-414/Cys-427, Cys-416/Cys-422, Cys-426/Cys-449, Cys-440/Cys-446, Cys-445/Cys-471, Cys-458/Cys-478, Cys-465/Cys-497, Cys-490/Cys-502, Cys-509/Cys-559, Cys-524/Cys-567, Cys-537/Cys-547, Cys-554/Cys-593, and Cys-587/Cys-598. His-332 serves as a coordination point for Zn(2+). Glu-333 is a catalytic residue. His-336 and His-342 together coordinate Zn(2+). Residues 400-486 (PAICGNYFVE…ECPTDIFRRN (87 aa)) form the Disintegrin domain. Residues 464 to 466 (DCD) carry the D/ECD-tripeptide motif.

This sequence belongs to the venom metalloproteinase (M12B) family. P-III subfamily. P-IIIa sub-subfamily. As to quaternary structure, monomer. Zn(2+) serves as cofactor. In terms of tissue distribution, expressed by the venom gland.

The protein resides in the secreted. In terms of biological role, snake venom zinc metalloproteinase that inhibits platelet aggregation and degrades fibrinogen. The sequence is that of Zinc metalloproteinase-disintegrin-like BfMP from Bungarus fasciatus (Banded krait).